The sequence spans 580 residues: Tetratricopeptide repeat protein 39C (580 aa).

3 TPR repeats span residues 312–345, 350–383, and 482–515; these read SLFMFFKGRIQRLECQINSALTSFHTALELAVDQ, HVCLYEIGWCSMIELNFKDAFDSFERLKNESRWS, and GLKHLLLGAIHKCLGNSQDALQFFQRAARDELCR.

This sequence belongs to the TTC39 family.

In Mus musculus (Mouse), this protein is Tetratricopeptide repeat protein 39C (Ttc39c).